The following is a 245-amino-acid chain: 1-(5-phosphoribosyl)-5-[(5-phosphoribosylamino)methylideneamino] imidazole-4-carboxamide isomerase (245 aa).

The active-site Proton acceptor is the aspartate 8. The Proton donor role is filled by aspartate 130.

It belongs to the HisA/HisF family.

It localises to the cytoplasm. The enzyme catalyses 1-(5-phospho-beta-D-ribosyl)-5-[(5-phospho-beta-D-ribosylamino)methylideneamino]imidazole-4-carboxamide = 5-[(5-phospho-1-deoxy-D-ribulos-1-ylimino)methylamino]-1-(5-phospho-beta-D-ribosyl)imidazole-4-carboxamide. It functions in the pathway amino-acid biosynthesis; L-histidine biosynthesis; L-histidine from 5-phospho-alpha-D-ribose 1-diphosphate: step 4/9. The chain is 1-(5-phosphoribosyl)-5-[(5-phosphoribosylamino)methylideneamino] imidazole-4-carboxamide isomerase from Pseudomonas putida (strain ATCC 700007 / DSM 6899 / JCM 31910 / BCRC 17059 / LMG 24140 / F1).